The chain runs to 317 residues: Acetyl-coenzyme A carboxylase carboxyl transferase subunit alpha (317 aa).

The CoA carboxyltransferase C-terminal domain occupies arginine 39–glycine 293.

Belongs to the AccA family. Acetyl-CoA carboxylase is a heterohexamer composed of biotin carboxyl carrier protein (AccB), biotin carboxylase (AccC) and two subunits each of ACCase subunit alpha (AccA) and ACCase subunit beta (AccD).

Its subcellular location is the cytoplasm. The catalysed reaction is N(6)-carboxybiotinyl-L-lysyl-[protein] + acetyl-CoA = N(6)-biotinyl-L-lysyl-[protein] + malonyl-CoA. It participates in lipid metabolism; malonyl-CoA biosynthesis; malonyl-CoA from acetyl-CoA: step 1/1. In terms of biological role, component of the acetyl coenzyme A carboxylase (ACC) complex. First, biotin carboxylase catalyzes the carboxylation of biotin on its carrier protein (BCCP) and then the CO(2) group is transferred by the carboxyltransferase to acetyl-CoA to form malonyl-CoA. The sequence is that of Acetyl-coenzyme A carboxylase carboxyl transferase subunit alpha from Methylobacterium sp. (strain 4-46).